Consider the following 450-residue polypeptide: NADP-specific glutamate dehydrogenase (450 aa).

Lysine 111 is a catalytic residue.

This sequence belongs to the Glu/Leu/Phe/Val dehydrogenases family. As to quaternary structure, homohexamer.

The catalysed reaction is L-glutamate + NADP(+) + H2O = 2-oxoglutarate + NH4(+) + NADPH + H(+). This chain is NADP-specific glutamate dehydrogenase, found in Hebeloma cylindrosporum.